We begin with the raw amino-acid sequence, 733 residues long: 1,4-alpha-glucan branching enzyme GlgB (733 aa).

D412 serves as the catalytic Nucleophile. E467 (proton donor) is an active-site residue.

Belongs to the glycosyl hydrolase 13 family. GlgB subfamily. In terms of assembly, monomer.

The catalysed reaction is Transfers a segment of a (1-&gt;4)-alpha-D-glucan chain to a primary hydroxy group in a similar glucan chain.. It participates in glycan biosynthesis; glycogen biosynthesis. Catalyzes the formation of the alpha-1,6-glucosidic linkages in glycogen by scission of a 1,4-alpha-linked oligosaccharide from growing alpha-1,4-glucan chains and the subsequent attachment of the oligosaccharide to the alpha-1,6 position. This Burkholderia vietnamiensis (strain G4 / LMG 22486) (Burkholderia cepacia (strain R1808)) protein is 1,4-alpha-glucan branching enzyme GlgB.